Reading from the N-terminus, the 715-residue chain is Fatty acid oxidation complex subunit alpha (715 aa).

The tract at residues 1–190 is enoyl-CoA hydratase; the sequence is MTTTSAFMLN…KAGLVDDVVP (190 aa). The interval 306–715 is 3-hydroxyacyl-CoA dehydrogenase; it reads GPLNSVGILG…WTNGETDQGN (410 aa).

In the N-terminal section; belongs to the enoyl-CoA hydratase/isomerase family. It in the central section; belongs to the 3-hydroxyacyl-CoA dehydrogenase family. As to quaternary structure, heterotetramer of two alpha chains (FadJ) and two beta chains (FadI).

The protein localises to the cytoplasm. It carries out the reaction a (3S)-3-hydroxyacyl-CoA = a (2E)-enoyl-CoA + H2O. The enzyme catalyses a 4-saturated-(3S)-3-hydroxyacyl-CoA = a (3E)-enoyl-CoA + H2O. It catalyses the reaction a (3S)-3-hydroxyacyl-CoA + NAD(+) = a 3-oxoacyl-CoA + NADH + H(+). The catalysed reaction is (3S)-3-hydroxybutanoyl-CoA = (3R)-3-hydroxybutanoyl-CoA. The protein operates within lipid metabolism; fatty acid beta-oxidation. Its function is as follows. Catalyzes the formation of a hydroxyacyl-CoA by addition of water on enoyl-CoA. Also exhibits 3-hydroxyacyl-CoA epimerase and 3-hydroxyacyl-CoA dehydrogenase activities. The protein is Fatty acid oxidation complex subunit alpha of Salmonella enteritidis PT4 (strain P125109).